Reading from the N-terminus, the 418-residue chain is Putative methylthiotransferase HP_0285 (418 aa).

In terms of domain architecture, MTTase N-terminal spans 2-110 (KKVYFKTFGC…INALLQEKKR (109 aa)). Residues Cys11, Cys45, Cys74, Cys144, Cys148, and Cys151 each coordinate [4Fe-4S] cluster. One can recognise a Radical SAM core domain in the interval 130–355 (FVGKTRAFIK…KDLIFHKNKA (226 aa)).

Belongs to the methylthiotransferase family. Requires [4Fe-4S] cluster as cofactor.

This is Putative methylthiotransferase HP_0285 from Helicobacter pylori (strain ATCC 700392 / 26695) (Campylobacter pylori).